Consider the following 764-residue polypeptide: Complement factor B (764 aa).

The signal sequence occupies residues 1 to 25; sequence MGSNLSPQLCLMPFILGLLSGGVTT. Sushi domains follow at residues 35 to 100, 101 to 160, and 163 to 220; these read GSCS…ECRA, IHCP…ICDN, and GYCS…SCQD. Cystine bridges form between Cys37/Cys76, Cys62/Cys98, Cys103/Cys145, Cys131/Cys158, Cys165/Cys205, and Cys191/Cys218. N-linked (GlcNAc...) asparagine glycosylation is found at Asn122 and Asn142. Positions 270 to 469 constitute a VWFA domain; that stretch reads NIYLVLDGSD…NLEDVFFQMI (200 aa). The Mg(2+) site is built by Ser278 and Ser280. Asn285 carries N-linked (GlcNAc...) asparagine glycosylation. Position 353 (Thr353) interacts with Mg(2+). The N-linked (GlcNAc...) asparagine glycan is linked to Asn378. The Peptidase S1 domain occupies 477–757; the sequence is LCGMVWEHRK…VLPWLKQKLQ (281 aa). 5 disulfides stabilise this stretch: Cys478-Cys596, Cys511-Cys527, Cys599-Cys615, Cys656-Cys682, and Cys695-Cys725. Catalysis depends on charge relay system residues His526 and Asp576. The active-site Charge relay system is Ser699.

This sequence belongs to the peptidase S1 family. As to quaternary structure, monomer. Interacts with complement C3b; this interaction is dependent on the presence of Mg(2+). Catalytic component of the C3 convertase of the alternative complement pathway, also named C3bBb, composed of complement factor B Bb and complement C3b. Catalytic component of the C5 convertase of the alternative complement pathway, also named C3bBb3b, composed of complement factor B Bb and additional molecules of complement C3b. Interacts to CFP; this interaction contributes to the stabilization of the active C3-convertase enzyme complex. Mg(2+) is required as a cofactor. Requires Mn(2+) as cofactor. Cleaved by CFD following activation of the alternative complement system, generating Ba and Bb chains. Cleavage and activation takes place when CFB is already associated with complement C3b.

The protein resides in the secreted. It localises to the cell surface. It catalyses the reaction Cleavage of Arg-|-Ser bond in complement component C3 alpha-chain to yield C3a and C3b, and Arg-|-Xaa bond in complement component C5 alpha-chain to yield C5a and C5b.. Its function is as follows. Precursor of the catalytic component of the C3 and C5 convertase complexes of the alternative pathway of the complement system, a cascade of proteins that leads to phagocytosis and breakdown of pathogens and signaling that strengthens the adaptive immune system. The alternative complement pathway acts as an amplification loop that enhances other complement pathways (classical, lectin and GZMK) by promoting formation of additional C3 and C5 convertases. CFB is cleaved and activated by CFD to generate Ba and Bb chains; Bb chain constituting the catalytic component of the C3 and C5 convertases. Functionally, serine protease component of the complement C3 and C5 convertase complexes of the alternative complement pathway. Following cleavage and activation by factor D (CFD), forms the C3 convertase together with complement C3b. As part of the C3 convertase, cleaves and activates C3 into C3a anaphylatoxin and C3b opsonin, the next components of the complement pathways. When an additional complement C3b molecule binds to the C3 convertase, forms the C5 convertase, which cleaves and activates C5 into C5a anaphylatoxin and C5b component of the membrane attack complex. Involved in proliferation and differentiation of preactivated B-lymphocytes, rapid spreading of peripheral blood monocytes, stimulation of lymphocyte blastogenesis and lysis of erythrocytes. In Pongo pygmaeus (Bornean orangutan), this protein is Complement factor B (CFB).